Consider the following 339-residue polypeptide: Ketol-acid reductoisomerase (NADP(+)) (339 aa).

Residues 1 to 182 (MRVYYDRDAD…GGGRAGIIET (182 aa)) enclose the KARI N-terminal Rossmann domain. Residues 24 to 27 (YGSQ), Arg-48, Ser-51, Thr-53, and 83 to 86 (DELQ) contribute to the NADP(+) site. Residue His-108 is part of the active site. Gly-134 provides a ligand contact to NADP(+). Positions 183–328 (TFKEECETDL…AKLRGMMPWI (146 aa)) constitute a KARI C-terminal knotted domain. Mg(2+) is bound by residues Asp-191, Glu-195, Glu-227, and Glu-231. Substrate is bound at residue Ser-252.

It belongs to the ketol-acid reductoisomerase family. It depends on Mg(2+) as a cofactor.

It catalyses the reaction (2R)-2,3-dihydroxy-3-methylbutanoate + NADP(+) = (2S)-2-acetolactate + NADPH + H(+). It carries out the reaction (2R,3R)-2,3-dihydroxy-3-methylpentanoate + NADP(+) = (S)-2-ethyl-2-hydroxy-3-oxobutanoate + NADPH + H(+). It participates in amino-acid biosynthesis; L-isoleucine biosynthesis; L-isoleucine from 2-oxobutanoate: step 2/4. Its pathway is amino-acid biosynthesis; L-valine biosynthesis; L-valine from pyruvate: step 2/4. Its function is as follows. Involved in the biosynthesis of branched-chain amino acids (BCAA). Catalyzes an alkyl-migration followed by a ketol-acid reduction of (S)-2-acetolactate (S2AL) to yield (R)-2,3-dihydroxy-isovalerate. In the isomerase reaction, S2AL is rearranged via a Mg-dependent methyl migration to produce 3-hydroxy-3-methyl-2-ketobutyrate (HMKB). In the reductase reaction, this 2-ketoacid undergoes a metal-dependent reduction by NADPH to yield (R)-2,3-dihydroxy-isovalerate. This is Ketol-acid reductoisomerase (NADP(+)) from Methylorubrum extorquens (strain CM4 / NCIMB 13688) (Methylobacterium extorquens).